The following is a 160-amino-acid chain: MIKPKKLSSLMKQAVEETVPSIMVFTTTGSLLAYVSFEDPKDGLKRLDLAKRVRSIAALAGNMYSLYTATNPSPLVAESTDDVIAHQRDVLFETIIEFERGKLLIAAISIDGAEDKLYSKDPLLLGIVGTENAKEGMMQIKSELLKECITNELSTLGKPV.

It is found in the cytoplasm. Its subcellular location is the nucleus. This is an uncharacterized protein from Schizosaccharomyces pombe (strain 972 / ATCC 24843) (Fission yeast).